Here is a 328-residue protein sequence, read N- to C-terminus: UPF0421 protein SAR1980 (328 aa).

Helical transmembrane passes span 19-39 (IAIFLTAVFCMALDLTPIYAI), 61-81 (LPATVIGAGFAVLFTYLFGDQ), 108-128 (VAVLTSLAMIPGIHDAYIFNF), and 132-152 (TLTAIIGLVTSGLINFMVFPP).

This sequence belongs to the UPF0421 family.

It is found in the cell membrane. The chain is UPF0421 protein SAR1980 from Staphylococcus aureus (strain MRSA252).